The sequence spans 489 residues: Ribulose bisphosphate carboxylase large chain (489 aa).

Substrate-binding residues include N128 and T178. Catalysis depends on K180, which acts as the Proton acceptor. Substrate is bound at residue K182. Mg(2+) contacts are provided by K206, D208, and E209. At K206 the chain carries N6-carboxylysine. H298 (proton acceptor) is an active-site residue. Substrate is bound by residues R299, H331, and S383.

The protein belongs to the RuBisCO large chain family. Type I subfamily. In terms of assembly, heterohexadecamer of 8 large chains and 8 small chains. The cofactor is Mg(2+).

The catalysed reaction is 2 (2R)-3-phosphoglycerate + 2 H(+) = D-ribulose 1,5-bisphosphate + CO2 + H2O. It carries out the reaction D-ribulose 1,5-bisphosphate + O2 = 2-phosphoglycolate + (2R)-3-phosphoglycerate + 2 H(+). In terms of biological role, ruBisCO catalyzes two reactions: the carboxylation of D-ribulose 1,5-bisphosphate, the primary event in carbon dioxide fixation, as well as the oxidative fragmentation of the pentose substrate. Both reactions occur simultaneously and in competition at the same active site. The protein is Ribulose bisphosphate carboxylase large chain of Nitrosospira sp. (strain 40KI).